A 386-amino-acid polypeptide reads, in one-letter code: SET and MYND domain-containing protein DDB_G0273589 (386 aa).

Residues 6–294 (NGLELKSSEN…KGDQLTISYI (289 aa)) form the SET domain. An MYND-type zinc finger spans residues 51–94 (CFNCIKQLPSVIKLSLKCNQCNEIWYCNEQCKNENINKHQHYEC). Residues 136–171 (NNKFIEQQLNNNNNNNNDNEQLTNTLDDVFDLVENQ) adopt a coiled-coil conformation.

Belongs to the class V-like SAM-binding methyltransferase superfamily.

Probable methyltransferase. In Dictyostelium discoideum (Social amoeba), this protein is SET and MYND domain-containing protein DDB_G0273589.